The chain runs to 2327 residues: Nonribosomal peptide synthetase apmB (2327 aa).

An adenylation 1 region spans residues 214-605 (DTQAKSRPDS…GRKDMQIKLR (392 aa)). The region spanning 734–810 (EPATATGKVL…EMADACTKVI (77 aa)) is the Carrier 1 domain. Residue S771 is modified to O-(pantetheine 4'-phosphoryl)serine. The segment at 845–1259 (EDLYPCTAMQ…IFISSKDQES (415 aa)) is condensation 1. The tract at residues 1281–1675 (ERIAERPDHE…RRKDTQVKLR (395 aa)) is adenylation 2. One can recognise a Carrier 2 domain in the interval 1816–1892 (PPTTDMQITM…AISAVAETLS (77 aa)). S1853 bears the O-(pantetheine 4'-phosphoryl)serine mark. Positions 1937–2260 (TDFQSLAING…VFQYQDFGGE (324 aa)) are condensation 2. Residues 2299–2327 (RVDLPRRPSPAGDTRDGPTAASDSPSRAR) form a disordered region.

It belongs to the NRP synthetase family.

The catalysed reaction is N-benzoyl-L-phenylalaninol + benzoate + L-phenylalanine + 2 ATP = asperphenamate + 2 AMP + 2 diphosphate + H(+). It participates in secondary metabolite biosynthesis. Functionally, nonribosomal peptide synthetase; part of the gene cluster that mediates the biosynthesis of asperphenamate, a rare linear amino acid ester that exhibits antitumor activity towards a number of cell lines. The structure of asperphenamate contains two subunits, N-benzoylphenylalanine and N-benzoylphenylalaninol, which are connected by an inter-molecular ester bond. The first step of asperphenamate biosynthesis is the generation of N-benzoylphenylalaninol by the nonribosomal peptide synthase apmA. Using phenylalanine and benzoic acid as substrates, apmA catalyzes amide bond formation and tethers the intermediate into the NRPS chain. Then, the terminal R domain of apmA catalyzes the reduction reaction to get the shunt product N-benzoylphenylalaninol. Subsequently, the nonribosomal peptide synthase apmB activates the same substrates as does apmA (phenylalanine and benzoic acid) to produce N-benzoylphenylalanine before condensing N-benzoylphenylalanine and N-benzoylphenylalaninol to release asperphenamate. In Penicillium brevicompactum, this protein is Nonribosomal peptide synthetase apmB.